A 154-amino-acid polypeptide reads, in one-letter code: Cyanate hydratase (154 aa).

Active-site residues include R100, E103, and S126.

This sequence belongs to the cyanase family.

It catalyses the reaction cyanate + hydrogencarbonate + 3 H(+) = NH4(+) + 2 CO2. Its function is as follows. Catalyzes the reaction of cyanate with bicarbonate to produce ammonia and carbon dioxide. The protein is Cyanate hydratase of Aspergillus clavatus (strain ATCC 1007 / CBS 513.65 / DSM 816 / NCTC 3887 / NRRL 1 / QM 1276 / 107).